Here is a 319-residue protein sequence, read N- to C-terminus: Beta-ketoacyl-[acyl-carrier-protein] synthase III (319 aa).

Catalysis depends on residues Cys112 and His246. Positions 247–251 (QANKR) are ACP-binding. Asn276 is a catalytic residue.

It belongs to the thiolase-like superfamily. FabH family. In terms of assembly, homodimer.

The protein resides in the cytoplasm. It carries out the reaction malonyl-[ACP] + acetyl-CoA + H(+) = 3-oxobutanoyl-[ACP] + CO2 + CoA. It functions in the pathway lipid metabolism; fatty acid biosynthesis. Catalyzes the condensation reaction of fatty acid synthesis by the addition to an acyl acceptor of two carbons from malonyl-ACP. Catalyzes the first condensation reaction which initiates fatty acid synthesis and may therefore play a role in governing the total rate of fatty acid production. Possesses both acetoacetyl-ACP synthase and acetyl transacylase activities. Its substrate specificity determines the biosynthesis of branched-chain and/or straight-chain of fatty acids. The polypeptide is Beta-ketoacyl-[acyl-carrier-protein] synthase III (Psychromonas ingrahamii (strain DSM 17664 / CCUG 51855 / 37)).